We begin with the raw amino-acid sequence, 440 residues long: Transposon Ty1-JR2 Gag polyprotein (440 aa).

Positions 1–16 are enriched in low complexity; the sequence is MESQQLSQHSHISHGS. Disordered stretches follow at residues 1–93, 126–173, and 352–440; these read MESQ…MMTQ, PQSQ…RPPP, and GSRN…PETY. Polar residues-rich tracts occupy residues 48-60, 71-93, and 127-152; these read TKAN…TPAS, SPQT…MMTQ, and QSQF…GNTF. The segment covering 153–165 has biased composition (low complexity); the sequence is TDSSSADSDMTST. The segment at 299–401 is RNA-binding; sequence NNGIHINNKV…NSKSKTARAH (103 aa). The span at 402 to 418 shows a compositional bias: low complexity; that stretch reads NVSTSNNSPSTDNDSIS. Serine 416 is subject to Phosphoserine. Polar residues predominate over residues 419–428; sequence KSTTEPIQLN. Basic and acidic residues predominate over residues 429-440; it reads NKHDLHLRPETY.

Homotrimer.

The protein resides in the cytoplasm. Capsid protein (CA) is the structural component of the virus-like particle (VLP), forming the shell that encapsulates the retrotransposons dimeric RNA genome. The particles are assembled from trimer-clustered units and there are holes in the capsid shells that allow for the diffusion of macromolecules. CA also has nucleocapsid-like chaperone activity, promoting primer tRNA(i)-Met annealing to the multipartite primer-binding site (PBS), dimerization of Ty1 RNA and initiation of reverse transcription. In Saccharomyces cerevisiae (strain ATCC 204508 / S288c) (Baker's yeast), this protein is Transposon Ty1-JR2 Gag polyprotein (TY1A-JR2).